The chain runs to 342 residues: MMILGKAGILAQYGTIYVRQNTIRNNLSSCIFKQSLCAFHSLAKVLQQKQVPLDLSYDIIKRDAVKTGDEGKPRPPIIILHGLFGNKLNNRSIGRNLNKKLGRDVYLLDLRNHGSSPHSSVHNYEVMSEDVKHFITKHELNTNGGPIIIGHSMGGKVAMMLVLKNPQLCSMLVCIENAPVSLRPNAEFVEYIKALMEIVNDKGKTIRTLKQADEHLAERIGGNELVRRFLLTALKKVKMDNSSSVSSYTFEERIPLATLKDAIVKGEIAAWPLDPARERWTRPALFIRATQSHYVVDEYLPIIGAFFPRFETRDIDAGHWVNAEKPGECAESIVDFVERHED.

The N-terminal 38 residues, 1–38 (MMILGKAGILAQYGTIYVRQNTIRNNLSSCIFKQSLCA), are a transit peptide targeting the mitochondrion. A propeptide spans 39-46 (FHSLAKVL) (removed in mature form). The 252-residue stretch at 75–326 (PPIIILHGLF…AGHWVNAEKP (252 aa)) folds into the AB hydrolase-1 domain. Active-site charge relay system residues include Ser-152 and His-319.

Belongs to the AB hydrolase superfamily. In terms of processing, processed by both the mitochondrial processing peptidase (MPP) and the mitochondrial octapeptidyl aminopeptidase (OCT1).

The protein resides in the mitochondrion. Functionally, probable alcohol acetyltransferase that uses acetyl-CoA to synthesize acetate esters from various alcohols. Not involved in the synthesis of ethyl acetate. In Saccharomyces cerevisiae (strain ATCC 204508 / S288c) (Baker's yeast), this protein is Probable alcohol acetyltransferase (IMO32).